The following is a 469-amino-acid chain: Aspartyl/glutamyl-tRNA(Asn/Gln) amidotransferase subunit B (469 aa).

This sequence belongs to the GatB/GatE family. GatB subfamily. As to quaternary structure, heterotrimer of A, B and C subunits.

The enzyme catalyses L-glutamyl-tRNA(Gln) + L-glutamine + ATP + H2O = L-glutaminyl-tRNA(Gln) + L-glutamate + ADP + phosphate + H(+). The catalysed reaction is L-aspartyl-tRNA(Asn) + L-glutamine + ATP + H2O = L-asparaginyl-tRNA(Asn) + L-glutamate + ADP + phosphate + 2 H(+). Its function is as follows. Allows the formation of correctly charged Asn-tRNA(Asn) or Gln-tRNA(Gln) through the transamidation of misacylated Asp-tRNA(Asn) or Glu-tRNA(Gln) in organisms which lack either or both of asparaginyl-tRNA or glutaminyl-tRNA synthetases. The reaction takes place in the presence of glutamine and ATP through an activated phospho-Asp-tRNA(Asn) or phospho-Glu-tRNA(Gln). The chain is Aspartyl/glutamyl-tRNA(Asn/Gln) amidotransferase subunit B from Methanococcus vannielii (strain ATCC 35089 / DSM 1224 / JCM 13029 / OCM 148 / SB).